Reading from the N-terminus, the 198-residue chain is Glycerol-3-phosphate acyltransferase (198 aa).

Helical transmembrane passes span 5–25 (YLII…SIAI), 55–75 (VGLA…YLGF), 79–99 (GSLG…LPVL), 114–134 (VLLF…LIVV), 139–159 (YVSL…LIYI), and 164–184 (YIGL…RSNI).

It belongs to the PlsY family. As to quaternary structure, probably interacts with PlsX.

The protein resides in the cell membrane. It catalyses the reaction an acyl phosphate + sn-glycerol 3-phosphate = a 1-acyl-sn-glycero-3-phosphate + phosphate. It participates in lipid metabolism; phospholipid metabolism. Catalyzes the transfer of an acyl group from acyl-phosphate (acyl-PO(4)) to glycerol-3-phosphate (G3P) to form lysophosphatidic acid (LPA). This enzyme utilizes acyl-phosphate as fatty acyl donor, but not acyl-CoA or acyl-ACP. This chain is Glycerol-3-phosphate acyltransferase, found in Finegoldia magna (strain ATCC 29328 / DSM 20472 / WAL 2508) (Peptostreptococcus magnus).